A 422-amino-acid polypeptide reads, in one-letter code: Tyrosine--tRNA ligase (422 aa).

L-tyrosine is bound at residue Tyr35. The 'HIGH' region signature appears at 40-49; that stretch reads PTAASLHVGH. The L-tyrosine site is built by Tyr169 and Gln173. Positions 229-233 match the 'KMSKS' region motif; it reads KFGKT. An ATP-binding site is contributed by Lys232. Positions 352 to 418 constitute an S4 RNA-binding domain; it reads VRLAQLFADT…GKKSLASVAV (67 aa).

The protein belongs to the class-I aminoacyl-tRNA synthetase family. TyrS type 1 subfamily. As to quaternary structure, homodimer.

The protein localises to the cytoplasm. It carries out the reaction tRNA(Tyr) + L-tyrosine + ATP = L-tyrosyl-tRNA(Tyr) + AMP + diphosphate + H(+). Functionally, catalyzes the attachment of tyrosine to tRNA(Tyr) in a two-step reaction: tyrosine is first activated by ATP to form Tyr-AMP and then transferred to the acceptor end of tRNA(Tyr). The protein is Tyrosine--tRNA ligase of Kineococcus radiotolerans (strain ATCC BAA-149 / DSM 14245 / SRS30216).